The primary structure comprises 289 residues: Ribosomal RNA small subunit methyltransferase A (289 aa).

Asn-21, Leu-23, Gly-48, Glu-69, Asp-94, and Asn-120 together coordinate S-adenosyl-L-methionine.

It belongs to the class I-like SAM-binding methyltransferase superfamily. rRNA adenine N(6)-methyltransferase family. RsmA subfamily.

Its subcellular location is the cytoplasm. The catalysed reaction is adenosine(1518)/adenosine(1519) in 16S rRNA + 4 S-adenosyl-L-methionine = N(6)-dimethyladenosine(1518)/N(6)-dimethyladenosine(1519) in 16S rRNA + 4 S-adenosyl-L-homocysteine + 4 H(+). Functionally, specifically dimethylates two adjacent adenosines (A1518 and A1519) in the loop of a conserved hairpin near the 3'-end of 16S rRNA in the 30S particle. May play a critical role in biogenesis of 30S subunits. The polypeptide is Ribosomal RNA small subunit methyltransferase A (Actinobacillus pleuropneumoniae serotype 3 (strain JL03)).